A 78-amino-acid polypeptide reads, in one-letter code: Broad mercury transporter MerE (78 aa).

2 helical membrane passes run leucine 19 to leucine 39 and phenylalanine 47 to valine 67.

The protein localises to the cell inner membrane. Broad mercury transporter that mediates the transport of both CH(3)Hg(I) and Hg(II) across the membrane. In Shigella flexneri, this protein is Broad mercury transporter MerE.